The primary structure comprises 254 residues: Imidazole glycerol phosphate synthase subunit HisF (254 aa).

Catalysis depends on residues Asp-12 and Asp-131.

It belongs to the HisA/HisF family. Heterodimer of HisH and HisF.

It is found in the cytoplasm. It carries out the reaction 5-[(5-phospho-1-deoxy-D-ribulos-1-ylimino)methylamino]-1-(5-phospho-beta-D-ribosyl)imidazole-4-carboxamide + L-glutamine = D-erythro-1-(imidazol-4-yl)glycerol 3-phosphate + 5-amino-1-(5-phospho-beta-D-ribosyl)imidazole-4-carboxamide + L-glutamate + H(+). Its pathway is amino-acid biosynthesis; L-histidine biosynthesis; L-histidine from 5-phospho-alpha-D-ribose 1-diphosphate: step 5/9. In terms of biological role, IGPS catalyzes the conversion of PRFAR and glutamine to IGP, AICAR and glutamate. The HisF subunit catalyzes the cyclization activity that produces IGP and AICAR from PRFAR using the ammonia provided by the HisH subunit. In Leuconostoc mesenteroides subsp. mesenteroides (strain ATCC 8293 / DSM 20343 / BCRC 11652 / CCM 1803 / JCM 6124 / NCDO 523 / NBRC 100496 / NCIMB 8023 / NCTC 12954 / NRRL B-1118 / 37Y), this protein is Imidazole glycerol phosphate synthase subunit HisF.